A 147-amino-acid chain; its full sequence is UPF0306 protein YhbP (147 aa).

It belongs to the UPF0306 family.

This chain is UPF0306 protein YhbP, found in Escherichia coli O6:K15:H31 (strain 536 / UPEC).